Reading from the N-terminus, the 161-residue chain is Peptidyl-prolyl cis-trans isomerase-like 3 (161 aa).

At serine 2 the chain carries N-acetylserine. Positions 2 to 154 constitute a PPIase cyclophilin-type domain; it reads SVTLHTDVGD…NDVHIKDITI (153 aa). Arginine 61 carries the post-translational modification Omega-N-methylarginine.

It belongs to the cyclophilin-type PPIase family. PPIL3 subfamily. In terms of assembly, identified in the spliceosome C complex. As to expression, ubiquitous. Detected at low levels.

It carries out the reaction [protein]-peptidylproline (omega=180) = [protein]-peptidylproline (omega=0). Functionally, PPIases accelerate the folding of proteins. It catalyzes the cis-trans isomerization of proline imidic peptide bonds in oligopeptides. May be involved in pre-mRNA splicing. The sequence is that of Peptidyl-prolyl cis-trans isomerase-like 3 (PPIL3) from Homo sapiens (Human).